A 77-amino-acid chain; its full sequence is Small ribosomal subunit protein bS20 (77 aa).

The protein belongs to the bacterial ribosomal protein bS20 family.

In terms of biological role, binds directly to 16S ribosomal RNA. The chain is Small ribosomal subunit protein bS20 from Streptococcus agalactiae serotype Ia (strain ATCC 27591 / A909 / CDC SS700).